The primary structure comprises 254 residues: 5'-nucleotidase SurE (254 aa).

The a divalent metal cation site is built by aspartate 8, aspartate 9, serine 39, and asparagine 97.

It belongs to the SurE nucleotidase family. Requires a divalent metal cation as cofactor.

The protein resides in the cytoplasm. The catalysed reaction is a ribonucleoside 5'-phosphate + H2O = a ribonucleoside + phosphate. Functionally, nucleotidase that shows phosphatase activity on nucleoside 5'-monophosphates. The polypeptide is 5'-nucleotidase SurE (Alkaliphilus metalliredigens (strain QYMF)).